The following is a 238-amino-acid chain: Large ribosomal subunit protein uL1 (238 aa).

This sequence belongs to the universal ribosomal protein uL1 family. Part of the 50S ribosomal subunit.

Binds directly to 23S rRNA. The L1 stalk is quite mobile in the ribosome, and is involved in E site tRNA release. Its function is as follows. Protein L1 is also a translational repressor protein, it controls the translation of the L11 operon by binding to its mRNA. The polypeptide is Large ribosomal subunit protein uL1 (Beutenbergia cavernae (strain ATCC BAA-8 / DSM 12333 / CCUG 43141 / JCM 11478 / NBRC 16432 / NCIMB 13614 / HKI 0122)).